A 197-amino-acid chain; its full sequence is Carbohydrate-binding X8 domain-containing protein (197 aa).

The N-terminal stretch at 1–19 (MAVLLPLFLLSFMFTYSNA) is a signal peptide. The segment covering 101–113 (SCLSSSSSNGTPT) has biased composition (low complexity). Positions 101–176 (SCLSSSSSNG…TSGDPNGGEE (76 aa)) are disordered. Over residues 116–125 (YPSTGNSTTA) the composition is skewed to polar residues. Residues 126 to 145 (SPGTTNPSTGNSTNSTLPTN) are compositionally biased toward low complexity. Residues 146-155 (DKPTSSTITF) are compositionally biased toward polar residues. Over residues 156–170 (PDSTTMGPSSSTSGD) the composition is skewed to low complexity. The GPI-anchor amidated asparagine moiety is linked to residue Asn172. Residues 173–197 (GGEELSVRTTTIILLTTIAAVALRV) constitute a propeptide, removed in mature form.

In terms of tissue distribution, expressed in the sieve elements.

It localises to the cell membrane. This is Carbohydrate-binding X8 domain-containing protein from Arabidopsis thaliana (Mouse-ear cress).